The sequence spans 73 residues: UPF0154 protein LGAS_0795 (73 aa).

Residues 3–23 (LGLAIFLIIIALLIGLVGGFY) traverse the membrane as a helical segment.

This sequence belongs to the UPF0154 family.

It is found in the cell membrane. This chain is UPF0154 protein LGAS_0795, found in Lactobacillus gasseri (strain ATCC 33323 / DSM 20243 / BCRC 14619 / CIP 102991 / JCM 1131 / KCTC 3163 / NCIMB 11718 / NCTC 13722 / AM63).